Consider the following 317-residue polypeptide: N(5)-(carboxyethyl)ornithine synthase (317 aa).

Residues Arg15, Lys71, and His92 each contribute to the pyruvate site. NADP(+) is bound at residue 172–177 (GSGNVS).

This sequence belongs to the AlaDH/PNT family. CEOS subfamily. In terms of assembly, homotetramer.

It catalyses the reaction N(5)-[1(S)-1-carboxyethyl]-L-ornithine + NADP(+) + H2O = L-ornithine + pyruvate + NADPH + H(+). In terms of biological role, catalyzes the NADPH-dependent reductive condensation between pyruvic acid and the side chain amino group of L-ornithine to form N(5)-(L-1-carboxyethyl)-L-ornithine. To a lesser extent, can also use L-lysine as substrate (yielding N(6)-(L-1-carboxyethyl)-L-lysine), and the D-isomers of the 2 basic amino acids. Can use alpha-keto acids other than pyruvate, e.g. glyoxylate. This is N(5)-(carboxyethyl)ornithine synthase (ceo) from Clostridium botulinum (strain Hall / ATCC 3502 / NCTC 13319 / Type A).